Consider the following 328-residue polypeptide: Peroxidase 63 (328 aa).

The signal sequence occupies residues 1–27 (MAEQSQLKNLTIILLLLCLSFQSLSFA). 4 disulfide bridges follow: Cys41-Cys122, Cys74-Cys79, Cys128-Cys324, and Cys207-Cys234. His72 acts as the Proton acceptor in catalysis. 4 residues coordinate Ca(2+): Asp73, Gly78, Asp80, and Ser82. Residue Pro170 coordinates substrate. A heme b-binding site is contributed by His200. A Ca(2+)-binding site is contributed by Thr201. 2 N-linked (GlcNAc...) asparagine glycosylation sites follow: Asn217 and Asn218. Residues Asp248, Thr251, and Asp256 each contribute to the Ca(2+) site.

This sequence belongs to the peroxidase family. Classical plant (class III) peroxidase subfamily. Requires heme b as cofactor. It depends on Ca(2+) as a cofactor.

The protein resides in the secreted. The catalysed reaction is 2 a phenolic donor + H2O2 = 2 a phenolic radical donor + 2 H2O. Removal of H(2)O(2), oxidation of toxic reductants, biosynthesis and degradation of lignin, suberization, auxin catabolism, response to environmental stresses such as wounding, pathogen attack and oxidative stress. These functions might be dependent on each isozyme/isoform in each plant tissue. In Arabidopsis thaliana (Mouse-ear cress), this protein is Peroxidase 63 (PER63).